The sequence spans 315 residues: Ribosomal protein L11 methyltransferase (315 aa).

4 residues coordinate S-adenosyl-L-methionine: Thr-164, Gly-185, Asp-207, and Asn-249.

It belongs to the methyltransferase superfamily. PrmA family.

The protein resides in the cytoplasm. The catalysed reaction is L-lysyl-[protein] + 3 S-adenosyl-L-methionine = N(6),N(6),N(6)-trimethyl-L-lysyl-[protein] + 3 S-adenosyl-L-homocysteine + 3 H(+). Methylates ribosomal protein L11. This is Ribosomal protein L11 methyltransferase from Lactobacillus johnsonii (strain CNCM I-12250 / La1 / NCC 533).